We begin with the raw amino-acid sequence, 140 residues long: Ergosterol biosynthetic protein 28 homolog (140 aa).

A run of 4 helical transmembrane segments spans residues 4–24, 52–72, 79–99, and 105–125; these read FLNV…GNTL, TFGI…IDIH, ITLW…FVFG, and VGVL…LVGL.

This sequence belongs to the ERG28 family.

It is found in the endoplasmic reticulum membrane. This Mus musculus (Mouse) protein is Ergosterol biosynthetic protein 28 homolog.